We begin with the raw amino-acid sequence, 142 residues long: Complexin (142 aa).

Disordered stretches follow at residues 13–70 and 83–105; these read QLSA…MRQD and IVEA…PEEL. A coiled-coil region spans residues 29-138; it reads GDDKEKAEEE…NELKTQIEGK (110 aa). Residues 31–70 show a composition bias toward basic and acidic residues; that stretch reads DKEKAEEEERERQEAIKEAEDRRKEKHRKMEEEREKMRQD. Cys139 carries the cysteine methyl ester modification. Residue Cys139 is the site of S-farnesyl cysteine attachment. The propeptide at 140–142 is removed in mature form; the sequence is VMQ.

The protein belongs to the complexin/synaphin family. As to quaternary structure, binds to the SNARE core complex containing Snap25, synaptobrevin and Syx1A.

It localises to the membrane. In terms of biological role, positively regulates a late step in synaptic vesicle exocytosis. This is Complexin (cpx) from Drosophila melanogaster (Fruit fly).